We begin with the raw amino-acid sequence, 171 residues long: Ribosome maturation factor RimP (171 aa).

This sequence belongs to the RimP family.

The protein resides in the cytoplasm. Its function is as follows. Required for maturation of 30S ribosomal subunits. This Oleidesulfovibrio alaskensis (strain ATCC BAA-1058 / DSM 17464 / G20) (Desulfovibrio alaskensis) protein is Ribosome maturation factor RimP.